We begin with the raw amino-acid sequence, 119 residues long: Large ribosomal subunit protein uL22c (119 aa).

It belongs to the universal ribosomal protein uL22 family. As to quaternary structure, part of the 50S ribosomal subunit.

It is found in the plastid. It localises to the chloroplast. Functionally, this protein binds specifically to 23S rRNA. Its function is as follows. The globular domain of the protein is located near the polypeptide exit tunnel on the outside of the subunit, while an extended beta-hairpin is found that lines the wall of the exit tunnel in the center of the 70S ribosome. This Angiopteris evecta (Mule's foot fern) protein is Large ribosomal subunit protein uL22c (rpl22).